The primary structure comprises 431 residues: Glutamate-1-semialdehyde 2,1-aminomutase (431 aa).

Lys265 carries the N6-(pyridoxal phosphate)lysine modification.

This sequence belongs to the class-III pyridoxal-phosphate-dependent aminotransferase family. HemL subfamily. In terms of assembly, homodimer. Pyridoxal 5'-phosphate serves as cofactor.

The protein localises to the cytoplasm. The enzyme catalyses (S)-4-amino-5-oxopentanoate = 5-aminolevulinate. Its pathway is porphyrin-containing compound metabolism; protoporphyrin-IX biosynthesis; 5-aminolevulinate from L-glutamyl-tRNA(Glu): step 2/2. In Vibrio vulnificus (strain YJ016), this protein is Glutamate-1-semialdehyde 2,1-aminomutase.